Consider the following 297-residue polypeptide: tRNA-cytidine(32) 2-sulfurtransferase (297 aa).

The PP-loop motif motif lies at 45 to 50; that stretch reads SGGKDS. Residues cysteine 120, cysteine 123, and cysteine 211 each contribute to the [4Fe-4S] cluster site.

The protein belongs to the TtcA family. As to quaternary structure, homodimer. Mg(2+) serves as cofactor. Requires [4Fe-4S] cluster as cofactor.

Its subcellular location is the cytoplasm. The catalysed reaction is cytidine(32) in tRNA + S-sulfanyl-L-cysteinyl-[cysteine desulfurase] + AH2 + ATP = 2-thiocytidine(32) in tRNA + L-cysteinyl-[cysteine desulfurase] + A + AMP + diphosphate + H(+). The protein operates within tRNA modification. Functionally, catalyzes the ATP-dependent 2-thiolation of cytidine in position 32 of tRNA, to form 2-thiocytidine (s(2)C32). The sulfur atoms are provided by the cysteine/cysteine desulfurase (IscS) system. This is tRNA-cytidine(32) 2-sulfurtransferase from Vibrio campbellii (strain ATCC BAA-1116).